A 274-amino-acid polypeptide reads, in one-letter code: Ribosomal RNA small subunit methyltransferase A (274 aa).

Asparagine 26, leucine 28, glycine 53, glutamate 74, aspartate 94, and asparagine 114 together coordinate S-adenosyl-L-methionine.

It belongs to the class I-like SAM-binding methyltransferase superfamily. rRNA adenine N(6)-methyltransferase family. RsmA subfamily.

The protein localises to the cytoplasm. The enzyme catalyses adenosine(1518)/adenosine(1519) in 16S rRNA + 4 S-adenosyl-L-methionine = N(6)-dimethyladenosine(1518)/N(6)-dimethyladenosine(1519) in 16S rRNA + 4 S-adenosyl-L-homocysteine + 4 H(+). Specifically dimethylates two adjacent adenosines (A1518 and A1519) in the loop of a conserved hairpin near the 3'-end of 16S rRNA in the 30S particle. May play a critical role in biogenesis of 30S subunits. This chain is Ribosomal RNA small subunit methyltransferase A, found in Bdellovibrio bacteriovorus (strain ATCC 15356 / DSM 50701 / NCIMB 9529 / HD100).